The following is a 225-amino-acid chain: 2-C-methyl-D-erythritol 4-phosphate cytidylyltransferase (225 aa).

Belongs to the IspD/TarI cytidylyltransferase family. IspD subfamily.

The catalysed reaction is 2-C-methyl-D-erythritol 4-phosphate + CTP + H(+) = 4-CDP-2-C-methyl-D-erythritol + diphosphate. The protein operates within isoprenoid biosynthesis; isopentenyl diphosphate biosynthesis via DXP pathway; isopentenyl diphosphate from 1-deoxy-D-xylulose 5-phosphate: step 2/6. Functionally, catalyzes the formation of 4-diphosphocytidyl-2-C-methyl-D-erythritol from CTP and 2-C-methyl-D-erythritol 4-phosphate (MEP). The polypeptide is 2-C-methyl-D-erythritol 4-phosphate cytidylyltransferase (Cereibacter sphaeroides (strain ATCC 17023 / DSM 158 / JCM 6121 / CCUG 31486 / LMG 2827 / NBRC 12203 / NCIMB 8253 / ATH 2.4.1.) (Rhodobacter sphaeroides)).